Reading from the N-terminus, the 420-residue chain is Glucose-1-phosphate adenylyltransferase (420 aa).

Alpha-D-glucose 1-phosphate is bound by residues Tyr107, Gly173, 188 to 189 (EK), and Ser206.

It belongs to the bacterial/plant glucose-1-phosphate adenylyltransferase family. Homotetramer.

The enzyme catalyses alpha-D-glucose 1-phosphate + ATP + H(+) = ADP-alpha-D-glucose + diphosphate. It functions in the pathway glycan biosynthesis; glycogen biosynthesis. Functionally, involved in the biosynthesis of ADP-glucose, a building block required for the elongation reactions to produce glycogen. Catalyzes the reaction between ATP and alpha-D-glucose 1-phosphate (G1P) to produce pyrophosphate and ADP-Glc. This Shewanella frigidimarina (strain NCIMB 400) protein is Glucose-1-phosphate adenylyltransferase.